The primary structure comprises 66 residues: MRNELYQLWCVASAARGVAKSSFVRANSAMCEYVRTSNVLSRWTRDRQWEAAKALSQRVKKEYAAN.

This is an uncharacterized protein from Saccharomyces cerevisiae (strain ATCC 204508 / S288c) (Baker's yeast).